Here is a 161-residue protein sequence, read N- to C-terminus: Cytochrome c-type biogenesis protein CcmE (161 aa).

Residues Met-1–Arg-8 are Cytoplasmic-facing. The helical; Signal-anchor for type II membrane protein transmembrane segment at Leu-9–Ala-29 threads the bilayer. Topologically, residues Leu-30–Tyr-161 are periplasmic. 2 residues coordinate heme: His-131 and Tyr-135.

The protein belongs to the CcmE/CycJ family.

Its subcellular location is the cell inner membrane. Functionally, heme chaperone required for the biogenesis of c-type cytochromes. Transiently binds heme delivered by CcmC and transfers the heme to apo-cytochromes in a process facilitated by CcmF and CcmH. The sequence is that of Cytochrome c-type biogenesis protein CcmE from Shewanella woodyi (strain ATCC 51908 / MS32).